The sequence spans 92 residues: MTRSVWKGPFVDGYMLNKADASRASGRNEIIKIWSRRSTILPQFVGLTFGVYNGRKFLPVQVTENMVGHKFGEFSPTRTFNGHAADKKAKRG.

This sequence belongs to the universal ribosomal protein uS19 family.

Its function is as follows. Protein S19 forms a complex with S13 that binds strongly to the 16S ribosomal RNA. The sequence is that of Small ribosomal subunit protein uS19 from Acidiphilium cryptum (strain JF-5).